Consider the following 597-residue polypeptide: Elongation factor 4 (597 aa).

Positions Asp-2–Lys-184 constitute a tr-type G domain. GTP is bound by residues Asp-14–Thr-19 and Asn-131–Asp-134.

This sequence belongs to the TRAFAC class translation factor GTPase superfamily. Classic translation factor GTPase family. LepA subfamily.

The protein resides in the cell inner membrane. The enzyme catalyses GTP + H2O = GDP + phosphate + H(+). Functionally, required for accurate and efficient protein synthesis under certain stress conditions. May act as a fidelity factor of the translation reaction, by catalyzing a one-codon backward translocation of tRNAs on improperly translocated ribosomes. Back-translocation proceeds from a post-translocation (POST) complex to a pre-translocation (PRE) complex, thus giving elongation factor G a second chance to translocate the tRNAs correctly. Binds to ribosomes in a GTP-dependent manner. This is Elongation factor 4 from Cupriavidus pinatubonensis (strain JMP 134 / LMG 1197) (Cupriavidus necator (strain JMP 134)).